A 239-amino-acid chain; its full sequence is Probable plastid-lipid-associated protein 8, chloroplastic (239 aa).

Residues 1–52 (MAATASSLTIASSFSEPRTQIHSSRRLNLPLQYSIPYKVLRSRSRRLGLVVS) constitute a chloroplast transit peptide. Position 53 is an N-acetylserine (S53).

This sequence belongs to the PAP/fibrillin family.

It localises to the plastid. The protein localises to the chloroplast. In Arabidopsis thaliana (Mouse-ear cress), this protein is Probable plastid-lipid-associated protein 8, chloroplastic (PAP8).